A 394-amino-acid chain; its full sequence is S-adenosylmethionine synthase (394 aa).

ATP is bound at residue His15. Asp17 is a Mg(2+) binding site. Glu43 lines the K(+) pocket. Positions 56 and 99 each coordinate L-methionine. Positions 99–109 (QSPDIALGVNK) are flexible loop. ATP is bound by residues 173–175 (DGK), 239–240 (RF), Asp248, 254–255 (RK), Ala271, and Lys275. Asp248 serves as a coordination point for L-methionine. L-methionine is bound at residue Lys279.

Belongs to the AdoMet synthase family. In terms of assembly, homotetramer; dimer of dimers. Requires Mg(2+) as cofactor. It depends on K(+) as a cofactor.

Its subcellular location is the cytoplasm. The catalysed reaction is L-methionine + ATP + H2O = S-adenosyl-L-methionine + phosphate + diphosphate. The protein operates within amino-acid biosynthesis; S-adenosyl-L-methionine biosynthesis; S-adenosyl-L-methionine from L-methionine: step 1/1. In terms of biological role, catalyzes the formation of S-adenosylmethionine (AdoMet) from methionine and ATP. The overall synthetic reaction is composed of two sequential steps, AdoMet formation and the subsequent tripolyphosphate hydrolysis which occurs prior to release of AdoMet from the enzyme. The protein is S-adenosylmethionine synthase of Kosmotoga olearia (strain ATCC BAA-1733 / DSM 21960 / TBF 19.5.1).